Consider the following 33-residue polypeptide: Photosystem II reaction center protein Psb30 (33 aa).

The chain crosses the membrane as a helical span at residues Ile-5 to Leu-25.

It belongs to the Psb30/Ycf12 family. PSII is composed of 1 copy each of membrane proteins PsbA, PsbB, PsbC, PsbD, PsbE, PsbF, PsbH, PsbI, PsbJ, PsbK, PsbL, PsbM, PsbT, PsbX, PsbY, PsbZ, Psb30/Ycf12, peripheral proteins of the oxygen-evolving complex and a large number of cofactors. It forms dimeric complexes.

The protein resides in the plastid. Its subcellular location is the chloroplast thylakoid membrane. Functionally, a core subunit of photosystem II (PSII), probably helps stabilize the reaction center. The protein is Photosystem II reaction center protein Psb30 of Oedogonium cardiacum (Filamentous green alga).